The following is a 268-amino-acid chain: Putative sgc region protein SgcQ (268 aa).

The protein belongs to the BtpA family.

This Escherichia coli (strain K12) protein is Putative sgc region protein SgcQ (sgcQ).